The chain runs to 211 residues: MGQKSNPIGLRLGIVGTWDSLWYAGGGYASKLHEDLLLRSFVKKTFHHAAVSRVVIARKVDAVIINIHSARPGVIIGKKGTDIDRVKQKIAQMVNHDVELHIVEVKKPDLKAALIAENIAQQLEKRVSFRRAMKRGVQNCLKLGARGVKVSCSGRLGGAEIARTEWYKEGSVPLHTFRANIDYSCAEAKTIYGIVGVKVWVYVGDSRTGGE.

A KH type-2 domain is found at 38 to 106 (LRSFVKKTFH…DVELHIVEVK (69 aa)).

The protein belongs to the universal ribosomal protein uS3 family. As to quaternary structure, part of the 30S ribosomal subunit. Forms a tight complex with proteins S10 and S14.

Functionally, binds the lower part of the 30S subunit head. Binds mRNA in the 70S ribosome, positioning it for translation. The sequence is that of Small ribosomal subunit protein uS3 from Anaplasma marginale (strain Florida).